The sequence spans 451 residues: MSIQSSEIIETIKMVADQNFDVRTITIGIDLHDCISADIDELNKNIYQKITTIGKDLVETAKILSAKYGIPIVNQRISVTPIAQIAAATKADSYVSIAQTLDRAAKAIGVSFIGGFSALVQKGMSPSDEVLIRSIPEAMQTTDIVCSSINIGSTRAGINMDAVKLAGETIKRTADITPEGFGCAKIVVFCNAVEDNPFMAGAFHGSGEADAIINVGVSGPGVVKEALENSNATTLTEVAEVVKKTAFKITRVGELIGQEASKMLNIPFGILDLSLAPTPAIGDSVARILETMGLSVCGTHGTTAALALLNDAVKKGGMMASSSVGGLSGAFIPVSEDEGMIAAAESGILTLDKLEAMTAVCSVGLDMIAVPGKTPAHTISGIIADEAAIGMINSKTTAVRIIPVTGKDIGESVEFGGLLGYAPIMPVKEGSCEVFVNRGGRIPAPVQSMKN.

Belongs to the UPF0210 family. Homodimer.

The protein is UPF0210 protein APL_1491 of Actinobacillus pleuropneumoniae serotype 5b (strain L20).